A 373-amino-acid chain; its full sequence is P2Y purinoceptor 1 (373 aa).

The Extracellular portion of the chain corresponds to 1–51 (MTEVPWSAVPNGTDAAFLAGLGSLWGNSTIASTAAVSSSFRCALIKTGFQF). Asn11 and Asn27 each carry an N-linked (GlcNAc...) asparagine glycan. 2 disulfide bridges follow: Cys42/Cys296 and Cys124/Cys202. Lys46 is an ADP binding site. A helical membrane pass occupies residues 52 to 74 (YYLPAVYILVFIIGFLGNSVAIW). Residues 75–87 (MFVFHMKPWSGIS) are Cytoplasmic-facing. The helical transmembrane segment at 88–109 (VYMFNLALADFLYVLTLPALIF) threads the bilayer. The Extracellular portion of the chain corresponds to 110–125 (YYFNKTDWIFGDVMCK). Asn113 is a glycosylation site (N-linked (GlcNAc...) asparagine). The chain crosses the membrane as a helical span at residues 126–147 (LQRFIFHVNLYGSILFLTCISA). Topologically, residues 148-166 (HRYSGVVYPLKSLGRLKKK) are cytoplasmic. Residues 167–188 (NAIYVSVLVWLIVVVAISPILF) traverse the membrane as a helical segment. The Extracellular portion of the chain corresponds to 189-214 (YSGTGIRKNKTVTCYDSTSDEYLRSY). Asn197 carries an N-linked (GlcNAc...) asparagine glycan. 203-205 (YDS) is a binding site for ADP. Residues 215 to 237 (FIYSMCTTVAMFCIPLVLILGCY) traverse the membrane as a helical segment. Residues 238 to 260 (GLIVRALIYKDLDNSPLRRKSIY) are Cytoplasmic-facing. A helical membrane pass occupies residues 261–284 (LVIIVLTVFAVSYIPFHVMKTMNL). ADP-binding positions include 283–287 (NLRAR), 303–306 (YATY), and Arg310. The Extracellular segment spans residues 285–303 (RARLDFQTPEMCDFNDRVY). A helical transmembrane segment spans residues 304 to 325 (ATYQVTRGLASLNSCVDPILYF). Residues 326–373 (LAGDTFRRRLSRATRKASRRSEANLQSKSEEMTLNILSEFKQNGDTSL) are Cytoplasmic-facing.

The protein belongs to the G-protein coupled receptor 1 family. In terms of tissue distribution, expressed in muscle, heart, liver, kidney, lung, brain, spleen, but not in testis.

It is found in the cell membrane. Its function is as follows. Receptor for extracellular adenine nucleotides such as ADP. In platelets, binding to ADP leads to mobilization of intracellular calcium ions via activation of phospholipase C, a change in platelet shape, and ultimately platelet aggregation. The chain is P2Y purinoceptor 1 (P2ry1) from Rattus norvegicus (Rat).